The primary structure comprises 79 residues: RNA-binding protein Hfq (79 aa).

The region spanning 10-70 is the Sm domain; sequence DVFLKTVRKQ…ISTIMPGQPI (61 aa).

It belongs to the Hfq family. As to quaternary structure, homohexamer.

Functionally, RNA chaperone that binds small regulatory RNA (sRNAs) and mRNAs to facilitate mRNA translational regulation in response to envelope stress, environmental stress and changes in metabolite concentrations. Also binds with high specificity to tRNAs. This is RNA-binding protein Hfq from Bartonella bacilliformis (strain ATCC 35685 / KC583 / Herrer 020/F12,63).